A 117-amino-acid polypeptide reads, in one-letter code: NADPH-dependent 7-cyano-7-deazaguanine reductase (117 aa).

C31 serves as the catalytic Thioimide intermediate. The active-site Proton donor is D38. Residues 53 to 55 (IEL) and 72 to 73 (YE) each bind substrate.

This sequence belongs to the GTP cyclohydrolase I family. QueF type 1 subfamily.

It localises to the cytoplasm. It carries out the reaction 7-aminomethyl-7-carbaguanine + 2 NADP(+) = 7-cyano-7-deazaguanine + 2 NADPH + 3 H(+). It participates in tRNA modification; tRNA-queuosine biosynthesis. Functionally, catalyzes the NADPH-dependent reduction of 7-cyano-7-deazaguanine (preQ0) to 7-aminomethyl-7-deazaguanine (preQ1). This chain is NADPH-dependent 7-cyano-7-deazaguanine reductase, found in Chlorobaculum tepidum (strain ATCC 49652 / DSM 12025 / NBRC 103806 / TLS) (Chlorobium tepidum).